Here is a 137-residue protein sequence, read N- to C-terminus: 2-iminobutanoate/2-iminopropanoate deaminase (137 aa).

Ser-2 carries the post-translational modification N-acetylserine. Lys-13, Lys-60, and Lys-67 each carry N6-succinyllysine. Thr-74 carries the post-translational modification Phosphothreonine.

It belongs to the RutC family. In terms of assembly, homotrimer. Interacts with YTHDF2. Liver and kidney.

Its subcellular location is the cytoplasm. The protein resides in the nucleus. It is found in the peroxisome. The protein localises to the mitochondrion. It carries out the reaction 2-iminobutanoate + H2O = 2-oxobutanoate + NH4(+). The enzyme catalyses 2-iminopropanoate + H2O = pyruvate + NH4(+). Catalyzes the hydrolytic deamination of enamine/imine intermediates that form during the course of normal metabolism. May facilitate the release of ammonia from these potentially toxic reactive metabolites, reducing their impact on cellular components. It may act on enamine/imine intermediates formed by several types of pyridoxal-5'-phosphate-dependent dehydratases including L-threonine dehydratase. Functionally, also promotes endoribonucleolytic cleavage of some transcripts by promoting recruitment of the ribonuclease P/MRP complex. Acts by bridging YTHDF2 and the ribonuclease P/MRP complex. RIDA/HRSP12 binds to N6-methyladenosine (m6A)-containing mRNAs containing a 5'-GGUUC-3' motif: cooperative binding of RIDA/HRSP12 and YTHDF2 to such transcripts lead to recruitment of the ribonuclease P/MRP complex and subsequent endoribonucleolytic cleavage. The protein is 2-iminobutanoate/2-iminopropanoate deaminase of Rattus norvegicus (Rat).